The primary structure comprises 139 residues: Invertebrate-type lysozyme 2 (139 aa).

The first 18 residues, 1–18 (MFVKAILLLSIAVAYASA), serve as a signal peptide directing secretion. In terms of domain architecture, I-type lysozyme spans 19–138 (DCLHCICMRE…WKGVHSCCGC (120 aa)). 7 disulfides stabilise this stretch: Cys20–Cys106, Cys23–Cys138, Cys25–Cys31, Cys36–Cys45, Cys58–Cys86, Cys76–Cys82, and Cys98–Cys120. The active-site Proton donor is the Glu28. The active-site Nucleophile is the Asp39. 51-57 (KIPYYED) is a binding site for substrate. Substrate contacts are provided by residues Tyr90 and 113-115 (HNG).

It belongs to the glycosyl hydrolase 22 family. Type-I lysozyme subfamily. In terms of tissue distribution, expressed in pharyngeal muscle cell pm3, nerve ring and intestine.

The catalysed reaction is Hydrolysis of (1-&gt;4)-beta-linkages between N-acetylmuramic acid and N-acetyl-D-glucosamine residues in a peptidoglycan and between N-acetyl-D-glucosamine residues in chitodextrins.. In terms of biological role, has bacteriolytic activity against Gram-positive bacteria. May play a role in resistance to Gram-positive bacterium S.aureus infection. The polypeptide is Invertebrate-type lysozyme 2 (Caenorhabditis elegans).